The following is a 498-amino-acid chain: Glycerol kinase (498 aa).

Thr14 is a binding site for ADP. ATP-binding residues include Thr14, Thr15, and Ser16. Thr14 is a binding site for sn-glycerol 3-phosphate. Arg18 provides a ligand contact to ADP. Positions 84, 85, 136, and 245 each coordinate sn-glycerol 3-phosphate. Glycerol is bound by residues Arg84, Glu85, Tyr136, Asp245, and Gln246. The ADP site is built by Thr267 and Gly310. 4 residues coordinate ATP: Thr267, Gly310, Gln314, and Gly410. Positions 410 and 414 each coordinate ADP.

It belongs to the FGGY kinase family.

The catalysed reaction is glycerol + ATP = sn-glycerol 3-phosphate + ADP + H(+). Its pathway is polyol metabolism; glycerol degradation via glycerol kinase pathway; sn-glycerol 3-phosphate from glycerol: step 1/1. Its activity is regulated as follows. Inhibited by fructose 1,6-bisphosphate (FBP). Key enzyme in the regulation of glycerol uptake and metabolism. Catalyzes the phosphorylation of glycerol to yield sn-glycerol 3-phosphate. This Rhodospirillum centenum (strain ATCC 51521 / SW) protein is Glycerol kinase.